We begin with the raw amino-acid sequence, 214 residues long: Methylthioribulose-1-phosphate dehydratase (214 aa).

The Zn(2+) site is built by His103 and His105.

Belongs to the aldolase class II family. MtnB subfamily. Requires Zn(2+) as cofactor.

It carries out the reaction 5-(methylsulfanyl)-D-ribulose 1-phosphate = 5-methylsulfanyl-2,3-dioxopentyl phosphate + H2O. It participates in amino-acid biosynthesis; L-methionine biosynthesis via salvage pathway; L-methionine from S-methyl-5-thio-alpha-D-ribose 1-phosphate: step 2/6. Its function is as follows. Catalyzes the dehydration of methylthioribulose-1-phosphate (MTRu-1-P) into 2,3-diketo-5-methylthiopentyl-1-phosphate (DK-MTP-1-P). This chain is Methylthioribulose-1-phosphate dehydratase, found in Granulibacter bethesdensis (strain ATCC BAA-1260 / CGDNIH1).